Consider the following 232-residue polypeptide: Large ribosomal subunit protein uL1 (232 aa).

This sequence belongs to the universal ribosomal protein uL1 family. Part of the 50S ribosomal subunit.

Functionally, binds directly to 23S rRNA. The L1 stalk is quite mobile in the ribosome, and is involved in E site tRNA release. In terms of biological role, protein L1 is also a translational repressor protein, it controls the translation of the L11 operon by binding to its mRNA. The chain is Large ribosomal subunit protein uL1 from Jannaschia sp. (strain CCS1).